A 462-amino-acid polypeptide reads, in one-letter code: BPI fold-containing family B member 2 (462 aa).

Residues M1–T22 form the signal peptide. T55 bears the Phosphothreonine mark. S63 bears the Phosphoserine mark. N99 is a glycosylation site (N-linked (GlcNAc...) asparagine). C140 and C177 are disulfide-bonded. N-linked (GlcNAc...) asparagine glycosylation is found at N297 and N336.

Belongs to the BPI/LBP/Plunc superfamily. BPI/LBP family.

It is found in the secreted. This is BPI fold-containing family B member 2 (Bpifb2) from Mus musculus (Mouse).